Reading from the N-terminus, the 277-residue chain is Zinc finger protein 511 (277 aa).

C2H2-type zinc fingers lie at residues 96-121, 123-146, and 160-185; these read FRCH…NALH, NVCS…LEWH, and YECL…IRTH. The interval 225-244 is disordered; the sequence is ESSESMDFSLTPEPVETEPM.

It belongs to the krueppel C2H2-type zinc-finger protein family.

The protein localises to the nucleus. In terms of biological role, may be involved in transcriptional regulation. This is Zinc finger protein 511 (znf511) from Danio rerio (Zebrafish).